The sequence spans 245 residues: tRNA (guanine-N(1)-)-methyltransferase (245 aa).

Residues glycine 111 and methionine 131–leucine 136 contribute to the S-adenosyl-L-methionine site.

It belongs to the RNA methyltransferase TrmD family. In terms of assembly, homodimer.

It is found in the cytoplasm. It carries out the reaction guanosine(37) in tRNA + S-adenosyl-L-methionine = N(1)-methylguanosine(37) in tRNA + S-adenosyl-L-homocysteine + H(+). Specifically methylates guanosine-37 in various tRNAs. The polypeptide is tRNA (guanine-N(1)-)-methyltransferase (Staphylococcus epidermidis (strain ATCC 12228 / FDA PCI 1200)).